The chain runs to 125 residues: Calcitonin gene-related peptide 1 (125 aa).

Positions 1–25 (MVMLKISSFLAVYALVVCQMDSFQA) are cleaved as a signal peptide. The propeptide occupies 26–77 (APVRPGLESITDRVTLSDYEARRLLNALVKDFIQMTAEELEQASEGNSVTAQ). A disulfide bridge connects residues Cys-81 and Cys-86. Residue Phe-116 is modified to Phenylalanine amide. Positions 122 to 125 (SVQI) are excised as a propeptide.

The protein belongs to the calcitonin family.

The protein localises to the secreted. Its function is as follows. CGRP1/CALCA is a peptide hormone that induces vasodilation mediated by the CALCRL-RAMP1 receptor complex. Dilates a variety of vessels including the coronary, cerebral and systemic vasculature. Its abundance in the CNS also points toward a neurotransmitter or neuromodulator role. It also elevates platelet cAMP. CGRP1 can also bind and activate CALCR-RAMP1 (AMYR1) receptor complex. In Gallus gallus (Chicken), this protein is Calcitonin gene-related peptide 1 (CALCA).